Consider the following 117-residue polypeptide: Appetite-regulating hormone (117 aa).

The first 23 residues, 1–23 (MPSPGTVCSLLLFSMLWADLAMA), serve as a signal peptide directing secretion. The O-decanoyl serine; alternate moiety is linked to residue Ser26. Residue Ser26 is the site of O-hexanoyl serine; alternate attachment. Ser26 carries O-octanoyl serine; alternate lipidation. Positions 29-52 (SPEHQKVQQRKESKKPPAKLQPRA) are disordered. A compositionally biased stretch (basic and acidic residues) spans 31–43 (EHQKVQQRKESKK). Positions 52 to 75 (ALEGLIHPEDTSQVEGAEDELEIR) are cleaved as a propeptide — removed in mature form. Leucine amide is present on Leu98. Residues 99 to 117 (GKFLQDVLWEEADEVLADE) constitute a propeptide, removed in mature form.

This sequence belongs to the motilin family. O-octanoylated by GOAT/MBOAT4. O-octanoylation or O-decanoylation is essential for ghrelin activity. The O-decanoylated forms Ghrelin-27-C10 and Ghrelin-28-C10 differ in the length of the carbon backbone of the carboxylic acid bound to Ser-26. A small fraction of ghrelin, ghrelin-27-C10:1, ghrelin-27-C10:2, ghrelin-28-C8:1, ghrelin-28-C10:1, and ghrelin-28-C10:2, may be modified with singly or doubly unsaturated carboxylic acids. Post-translationally, amidation of Leu-98 is essential for obestatin activity.

Its subcellular location is the secreted. Its function is as follows. Ghrelin is the ligand for growth hormone secretagogue receptor type 1 (GHSR). Induces the release of growth hormone from the pituitary. Has an appetite-stimulating effect, induces adiposity and stimulates gastric acid secretion. Involved in growth regulation. Functionally, obestatin may be the ligand for GPR39. May have an appetite-reducing effect resulting in decreased food intake. May reduce gastric emptying activity and jejunal motility. This chain is Appetite-regulating hormone (GHRL), found in Felis catus (Cat).